The chain runs to 556 residues: MSQDGGQGRYAGRALAGGRYQLRDLLGEGGMASVHLAYDSVLDRQVAIKTLHTELGREQAFRERFRREAQAVAKLTHTNIVSVFDTGEDDLDGMTTPYIVMEYVEGRPLGSVLDEDVRQQGAMPADKALKITADVLAALEISHEMGLVHRDIKPGNVMMTKRGVVKVMDFGIARAMQSGVTSMTQTGMVVGTPQYLSPEQALGRGVDARSDLYSVGIMLFQLVTGRLPFDADSPLAIAYAHVQEQPVAPSAVNRALPPAVDALVARALKKNPNERFPSAEAMRDECLRVAASFQAAPPSIVPGAQTSSGAGVGSAVFPPVGQGTPAPTGPVQTPYQPTPSPGPNPYGTPAPAAHSPAYGYPQQAGYQTPAPAPYAQQQAAATPPPYNLTPSAQGSGSGSPGGKSNKPVIIGSIVVAVVAVGGLIGALLMNGGGDEDPEAGGGGSSTASVSASPSKAAGYRGPDKEKTIEKDKCTEPQESYNDPDKIQVPDFTFKYIGSVKECFNAAGWQMKVVEVDENTYGEGSVRDQFPTAGTDVDPENMPEIQLKVSTGNPPSE.

Positions 20–287 (YQLRDLLGEG…SAEAMRDECL (268 aa)) constitute a Protein kinase domain. Residues 26 to 34 (LGEGGMASV) and Lys-49 each bind ATP. The Proton acceptor role is filled by Asp-151. 2 disordered regions span residues 300 to 403 (IVPG…PGGK) and 435 to 485 (EDPE…DPDK). Pro residues predominate over residues 336–348 (QPTPSPGPNPYGT). Composition is skewed to low complexity over residues 360–381 (YPQQ…QAAA) and 445–458 (STAS…KAAG). Positions 461 to 475 (GPDKEKTIEKDKCTE) are enriched in basic and acidic residues. A PASTA domain is found at 482 to 550 (DPDKIQVPDF…MPEIQLKVST (69 aa)).

It belongs to the protein kinase superfamily. Ser/Thr protein kinase family.

It carries out the reaction L-seryl-[protein] + ATP = O-phospho-L-seryl-[protein] + ADP + H(+). The enzyme catalyses L-threonyl-[protein] + ATP = O-phospho-L-threonyl-[protein] + ADP + H(+). The protein is Serine/threonine-protein kinase PksC (pksC) of Streptomyces coelicolor (strain ATCC BAA-471 / A3(2) / M145).